Reading from the N-terminus, the 196-residue chain is RNA pyrophosphohydrolase (196 aa).

In terms of domain architecture, Nudix hydrolase spans 6–149 (GYRPNVGIVI…KRDVYRKVMK (144 aa)). A Nudix box motif is present at residues 38–59 (GGINDNESAEQAMYRELHEEVG).

It belongs to the Nudix hydrolase family. RppH subfamily. A divalent metal cation serves as cofactor.

Its function is as follows. Accelerates the degradation of transcripts by removing pyrophosphate from the 5'-end of triphosphorylated RNA, leading to a more labile monophosphorylated state that can stimulate subsequent ribonuclease cleavage. The polypeptide is RNA pyrophosphohydrolase (Haemophilus influenzae (strain ATCC 51907 / DSM 11121 / KW20 / Rd)).